We begin with the raw amino-acid sequence, 159 residues long: Ribose-5-phosphate isomerase B (159 aa).

D-ribulose 5-phosphate contacts are provided by residues 8-9 (DH) and 67-71 (GSGNG). E72 acts as the Proton acceptor in catalysis. The active-site Proton donor is the H99. The D-ribulose 5-phosphate site is built by N100, R110, R134, and R138.

This sequence belongs to the LacAB/RpiB family. Homodimer.

The enzyme catalyses aldehydo-D-ribose 5-phosphate = D-ribulose 5-phosphate. The protein operates within carbohydrate degradation; pentose phosphate pathway; D-ribose 5-phosphate from D-ribulose 5-phosphate (non-oxidative stage): step 1/1. Functionally, catalyzes the interconversion of ribulose-5-P and ribose-5-P. The protein is Ribose-5-phosphate isomerase B of Mycolicibacterium paratuberculosis (strain ATCC BAA-968 / K-10) (Mycobacterium paratuberculosis).